A 248-amino-acid polypeptide reads, in one-letter code: Isoprenyl transferase (248 aa).

Asp-23 is an active-site residue. Asp-23 is a Mg(2+) binding site. Residues 24–27 (GNGR), Trp-28, Arg-36, His-40, and 68–70 (STE) contribute to the substrate site. Residue Asn-71 is the Proton acceptor of the active site. Substrate is bound by residues Trp-72, Arg-74, Arg-185, and 191 to 193 (RIS). Glu-204 lines the Mg(2+) pocket.

It belongs to the UPP synthase family. In terms of assembly, homodimer. Mg(2+) serves as cofactor.

Catalyzes the condensation of isopentenyl diphosphate (IPP) with allylic pyrophosphates generating different type of terpenoids. The protein is Isoprenyl transferase of Neisseria meningitidis serogroup B (strain ATCC BAA-335 / MC58).